We begin with the raw amino-acid sequence, 439 residues long: Acyl transferase 7 (439 aa).

Residues 1-25 are disordered; it reads MAAAAPDKAVERLSQKLVHPSSPTP. Residues His-176 and Asp-383 each act as proton acceptor in the active site.

It belongs to the plant acyltransferase family.

In terms of biological role, involved in the incorporation of ferulate into the cell wall. May act as arabinoxylan feruloyl transferase. The sequence is that of Acyl transferase 7 from Oryza sativa subsp. japonica (Rice).